Here is a 286-residue protein sequence, read N- to C-terminus: E3 ubiquitin-protein ligase SINA-like 7 (286 aa).

The segment at 51–87 adopts an RING-type zinc-finger fold; it reads CPICYEAFTIPIFQCDNGHLACSSCCPKLNNKCPACT. Residues 101-285 form an SBD region; the sequence is VLESILIPCP…MRISVKKLNK (185 aa). The SIAH-type zinc-finger motif lies at 104–162; sequence SILIPCPNAKLGCKKNVSYGKELTHEKECMFSHCACPALDCNYTSSYKDLYTHYRITHM. The Zn(2+) site is built by C109, C116, H128, C132, C139, C144, H156, and H161.

It belongs to the SINA (Seven in absentia) family.

The enzyme catalyses S-ubiquitinyl-[E2 ubiquitin-conjugating enzyme]-L-cysteine + [acceptor protein]-L-lysine = [E2 ubiquitin-conjugating enzyme]-L-cysteine + N(6)-ubiquitinyl-[acceptor protein]-L-lysine.. The protein operates within protein modification; protein ubiquitination. E3 ubiquitin-protein ligase that mediates ubiquitination and subsequent proteasomal degradation of target proteins. E3 ubiquitin ligases accept ubiquitin from an E2 ubiquitin-conjugating enzyme in the form of a thioester and then directly transfers the ubiquitin to targeted substrates. It probably triggers the ubiquitin-mediated degradation of different substrates. In Arabidopsis thaliana (Mouse-ear cress), this protein is E3 ubiquitin-protein ligase SINA-like 7.